A 157-amino-acid polypeptide reads, in one-letter code: Protein NrdI (157 aa).

The protein belongs to the NrdI family.

Its function is as follows. Probably involved in ribonucleotide reductase function. This is Protein NrdI from Mycoplasma mycoides subsp. mycoides SC (strain CCUG 32753 / NCTC 10114 / PG1).